The chain runs to 167 residues: Centrin-3 (167 aa).

4 consecutive EF-hand domains span residues glutamate 25–aspartate 60, valine 61–glutamate 96, aspartate 98–asparagine 133, and methionine 134–isoleucine 167. Ca(2+) is bound by residues aspartate 38, aspartate 40, aspartate 42, and glutamate 49. Phosphoserine is present on serine 135. Positions 147, 149, 151, 153, and 158 each coordinate Ca(2+).

The protein belongs to the centrin family. In terms of assembly, monomer. Component of the TREX-2 complex (transcription and export complex 2), composed of at least ENY2, GANP, PCID2, SEM1, and either centrin CETN2 or CETN3. Interacts with USP49.

It is found in the cytoplasm. It localises to the cytoskeleton. Its subcellular location is the microtubule organizing center. The protein localises to the centrosome. The protein resides in the nucleus. It is found in the nucleolus. It localises to the nucleus envelope. Its subcellular location is the nuclear pore complex. The protein localises to the centriole. In terms of biological role, plays a fundamental role in microtubule-organizing center structure and function. Its function is as follows. As a component of the TREX-2 complex, involved in the export of mRNAs to the cytoplasm through the nuclear pores. This Mus musculus (Mouse) protein is Centrin-3 (Cetn3).